Consider the following 292-residue polypeptide: tRNA(Ile)-lysidine synthase (292 aa).

32–37 (SGGADS) is an ATP binding site.

It belongs to the tRNA(Ile)-lysidine synthase family.

The protein resides in the cytoplasm. The enzyme catalyses cytidine(34) in tRNA(Ile2) + L-lysine + ATP = lysidine(34) in tRNA(Ile2) + AMP + diphosphate + H(+). Its function is as follows. Ligates lysine onto the cytidine present at position 34 of the AUA codon-specific tRNA(Ile) that contains the anticodon CAU, in an ATP-dependent manner. Cytidine is converted to lysidine, thus changing the amino acid specificity of the tRNA from methionine to isoleucine. The polypeptide is tRNA(Ile)-lysidine synthase (Corynebacterium diphtheriae (strain ATCC 700971 / NCTC 13129 / Biotype gravis)).